Consider the following 341-residue polypeptide: Thymidine kinase (341 aa).

19-26 (GAYGIGKT) is a binding site for ATP. The active-site Proton acceptor is Glu-48. Tyr-66 and Gln-90 together coordinate substrate. Arg-183 serves as a coordination point for ATP. Arg-189 is a binding site for substrate.

The protein belongs to the herpesviridae thymidine kinase family. Homodimer.

It carries out the reaction thymidine + ATP = dTMP + ADP + H(+). Functionally, catalyzes the transfer of the gamma-phospho group of ATP to thymidine to generate dTMP in the salvage pathway of pyrimidine synthesis. The dTMP serves as a substrate for DNA polymerase during viral DNA replication. Allows the virus to be reactivated and to grow in non-proliferative cells lacking a high concentration of phosphorylated nucleic acid precursors. The protein is Thymidine kinase of Varicella-zoster virus (strain Oka vaccine) (HHV-3).